The primary structure comprises 176 residues: ATP-dependent protease subunit HslV (176 aa).

Residue Thr2 is part of the active site. Positions 157, 160, and 163 each coordinate Na(+).

Belongs to the peptidase T1B family. HslV subfamily. As to quaternary structure, a double ring-shaped homohexamer of HslV is capped on each side by a ring-shaped HslU homohexamer. The assembly of the HslU/HslV complex is dependent on binding of ATP.

It is found in the cytoplasm. The catalysed reaction is ATP-dependent cleavage of peptide bonds with broad specificity.. Allosterically activated by HslU binding. In terms of biological role, protease subunit of a proteasome-like degradation complex believed to be a general protein degrading machinery. The polypeptide is ATP-dependent protease subunit HslV (Salmonella agona (strain SL483)).